We begin with the raw amino-acid sequence, 393 residues long: NAD(P)H-quinone oxidoreductase subunit H, chloroplastic (393 aa).

This sequence belongs to the complex I 49 kDa subunit family. In terms of assembly, NDH is composed of at least 16 different subunits, 5 of which are encoded in the nucleus.

Its subcellular location is the plastid. It is found in the chloroplast thylakoid membrane. The enzyme catalyses a plastoquinone + NADH + (n+1) H(+)(in) = a plastoquinol + NAD(+) + n H(+)(out). It catalyses the reaction a plastoquinone + NADPH + (n+1) H(+)(in) = a plastoquinol + NADP(+) + n H(+)(out). NDH shuttles electrons from NAD(P)H:plastoquinone, via FMN and iron-sulfur (Fe-S) centers, to quinones in the photosynthetic chain and possibly in a chloroplast respiratory chain. The immediate electron acceptor for the enzyme in this species is believed to be plastoquinone. Couples the redox reaction to proton translocation, and thus conserves the redox energy in a proton gradient. This chain is NAD(P)H-quinone oxidoreductase subunit H, chloroplastic, found in Hordeum vulgare (Barley).